Consider the following 131-residue polypeptide: Profilin (131 aa).

It belongs to the profilin family. Occurs in many kinds of cells as a complex with monomeric actin in a 1:1 ratio.

It localises to the cytoplasm. Its subcellular location is the cytoskeleton. In terms of biological role, binds to actin and affects the structure of the cytoskeleton. At high concentrations, profilin prevents the polymerization of actin, whereas it enhances it at low concentrations. By binding to PIP2, it inhibits the formation of IP3 and DG. The sequence is that of Profilin from Prunus avium (Cherry).